The primary structure comprises 332 residues: NADH-quinone oxidoreductase subunit H (332 aa).

A run of 9 helical transmembrane segments spans residues 4 to 24, 44 to 64, 78 to 98, 120 to 140, 165 to 185, 194 to 214, 255 to 275, 279 to 299, and 312 to 332; these read FAFF…IFAS, IGPD…MIKL, FIFA…LAAI, VALL…FLGG, VGAL…LVDI, FSWL…ALFI, IAGA…FWII, IMMI…RAAF, and YLIL…TVLL.

This sequence belongs to the complex I subunit 1 family. NDH-1 is composed of 14 different subunits. Subunits NuoA, H, J, K, L, M, N constitute the membrane sector of the complex.

The protein localises to the cell inner membrane. It carries out the reaction a quinone + NADH + 5 H(+)(in) = a quinol + NAD(+) + 4 H(+)(out). Functionally, NDH-1 shuttles electrons from NADH, via FMN and iron-sulfur (Fe-S) centers, to quinones in the respiratory chain. The immediate electron acceptor for the enzyme in this species is believed to be ubiquinone. Couples the redox reaction to proton translocation (for every two electrons transferred, four hydrogen ions are translocated across the cytoplasmic membrane), and thus conserves the redox energy in a proton gradient. This subunit may bind ubiquinone. This is NADH-quinone oxidoreductase subunit H from Campylobacter jejuni subsp. jejuni serotype O:23/36 (strain 81-176).